A 138-amino-acid chain; its full sequence is Nucleoside diphosphate kinase (138 aa).

ATP-binding residues include Lys9, Phe57, Arg85, Thr91, Arg102, and Asn112. His120 acts as the Pros-phosphohistidine intermediate in catalysis.

Belongs to the NDK family. Homotetramer. It depends on Mg(2+) as a cofactor.

Its subcellular location is the cytoplasm. The catalysed reaction is a 2'-deoxyribonucleoside 5'-diphosphate + ATP = a 2'-deoxyribonucleoside 5'-triphosphate + ADP. It catalyses the reaction a ribonucleoside 5'-diphosphate + ATP = a ribonucleoside 5'-triphosphate + ADP. In terms of biological role, major role in the synthesis of nucleoside triphosphates other than ATP. The ATP gamma phosphate is transferred to the NDP beta phosphate via a ping-pong mechanism, using a phosphorylated active-site intermediate. The protein is Nucleoside diphosphate kinase of Streptococcus agalactiae serotype V (strain ATCC BAA-611 / 2603 V/R).